The sequence spans 429 residues: Phosphomethylpyrimidine synthase (429 aa).

Substrate is bound by residues Asn-66, Met-95, Tyr-124, His-163, 185–187 (SRG), 226–229 (DGLR), and Glu-265. His-269 contributes to the Zn(2+) binding site. Tyr-292 contacts substrate. His-333 is a binding site for Zn(2+). 3 residues coordinate [4Fe-4S] cluster: Cys-407, Cys-410, and Cys-414.

The protein belongs to the ThiC family. It depends on [4Fe-4S] cluster as a cofactor.

The enzyme catalyses 5-amino-1-(5-phospho-beta-D-ribosyl)imidazole + S-adenosyl-L-methionine = 4-amino-2-methyl-5-(phosphooxymethyl)pyrimidine + CO + 5'-deoxyadenosine + formate + L-methionine + 3 H(+). The protein operates within cofactor biosynthesis; thiamine diphosphate biosynthesis. In terms of biological role, catalyzes the synthesis of the hydroxymethylpyrimidine phosphate (HMP-P) moiety of thiamine from aminoimidazole ribotide (AIR) in a radical S-adenosyl-L-methionine (SAM)-dependent reaction. This chain is Phosphomethylpyrimidine synthase, found in Pyrococcus abyssi (strain GE5 / Orsay).